The primary structure comprises 362 residues: Somatostatin receptor type 5 (362 aa).

Residues 1 to 10 (MEPLSLTSTP) are compositionally biased toward polar residues. Residues 1-24 (MEPLSLTSTPSWNASAASSSSHNW) form a disordered region. Residues 1-35 (MEPLSLTSTPSWNASAASSSSHNWSLVDPVSPMGA) lie on the Extracellular side of the membrane. The segment covering 11–24 (SWNASAASSSSHNW) has biased composition (low complexity). 2 N-linked (GlcNAc...) asparagine glycosylation sites follow: Asn13 and Asn23. A helical membrane pass occupies residues 36-63 (RAVLVPVLYLLVCTVGLGGNTLVIYVVL). Residues 64 to 73 (RYAKMKTVTN) lie on the Cytoplasmic side of the membrane. A helical transmembrane segment spans residues 74–99 (VYILNLAVADVLFMLGLPFLATQNAV). The Extracellular portion of the chain corresponds to 100–110 (SYWPFGSFLCR). Residues Cys109 and Cys184 are joined by a disulfide bond. Residues 111-132 (LVMTLDGINQFTSIFCLMVMSV) form a helical membrane-spanning segment. The Cytoplasmic segment spans residues 133–154 (DRYLAVVHPLRSARWRRPRVAK). A helical membrane pass occupies residues 155 to 175 (LASAAVWVFSLLMSLPLLVFA). Residues 176–195 (DVQEGWGTCNLSWPEPVGLW) are Extracellular-facing. N-linked (GlcNAc...) asparagine glycosylation is present at Asn185. The chain crosses the membrane as a helical span at residues 196-220 (GAAFITYTSVLGFFGPLLVICLCYL). Topologically, residues 221–246 (LIVVKVKAAGMRVGSSRRRRSERKVT) are cytoplasmic. A helical membrane pass occupies residues 247–272 (RMVVVVVLVFVGCWLPFFIVNIVNLA). At 273 to 282 (FTLPEEPTSA) the chain is on the extracellular side. The chain crosses the membrane as a helical span at residues 283–307 (GLYFFVVVLSYANSCANPLLYGFLS). The Cytoplasmic segment spans residues 308–362 (DNFRQSFRKALCLRRGYGVEDADAIEPRPDKSGRPQTTLPTRSCEANGLMQTSRL). Cys319 carries the S-palmitoyl cysteine; by ZDHHC5 lipid modification. Residues 330–362 (DAIEPRPDKSGRPQTTLPTRSCEANGLMQTSRL) are disordered.

This sequence belongs to the G-protein coupled receptor 1 family. Heterodimer with SSTR2. Heterodimerization with SSTR2 increases cell growth inhibition activity of SSTR2. Palmitoylated at Cys-319 by ZDHHC5, but not ZDHHC8. Palmitoylation creates an additional intracellular loop which is thought to be important for efficient coupling to G-proteins and may target the protein to lipid rafts. In terms of tissue distribution, expressed in adult brain but not in liver, heart, spleen, or kidney.

Its subcellular location is the cell membrane. Its function is as follows. Receptor for somatostatin-28. The activity of this receptor is mediated by G proteins which inhibit adenylyl cyclase. Increases cell growth inhibition activity of SSTR2 following heterodimerization. The chain is Somatostatin receptor type 5 (Sstr5) from Mus musculus (Mouse).